Here is a 294-residue protein sequence, read N- to C-terminus: Syntaxin-19 (294 aa).

The 63-residue stretch at 209 to 271 folds into the t-SNARE coiled-coil homology domain; sequence LSEIEQRHKE…NNTKEKFGLA (63 aa).

This sequence belongs to the syntaxin family. As to quaternary structure, interacts with EGFR.

The protein localises to the cell membrane. The protein resides in the cytoplasm. Its function is as follows. Plays a role in endosomal trafficking of the epidermal growth factor receptor (EGFR). This chain is Syntaxin-19 (STX19), found in Pongo abelii (Sumatran orangutan).